The following is a 226-amino-acid chain: 2-C-methyl-D-erythritol 4-phosphate cytidylyltransferase (226 aa).

It belongs to the IspD/TarI cytidylyltransferase family. IspD subfamily.

It carries out the reaction 2-C-methyl-D-erythritol 4-phosphate + CTP + H(+) = 4-CDP-2-C-methyl-D-erythritol + diphosphate. It functions in the pathway isoprenoid biosynthesis; isopentenyl diphosphate biosynthesis via DXP pathway; isopentenyl diphosphate from 1-deoxy-D-xylulose 5-phosphate: step 2/6. Functionally, catalyzes the formation of 4-diphosphocytidyl-2-C-methyl-D-erythritol from CTP and 2-C-methyl-D-erythritol 4-phosphate (MEP). The chain is 2-C-methyl-D-erythritol 4-phosphate cytidylyltransferase from Rhodococcus jostii (strain RHA1).